The primary structure comprises 301 residues: ATP synthase gamma chain (301 aa).

It belongs to the ATPase gamma chain family. As to quaternary structure, F-type ATPases have 2 components, CF(1) - the catalytic core - and CF(0) - the membrane proton channel. CF(1) has five subunits: alpha(3), beta(3), gamma(1), delta(1), epsilon(1). CF(0) has three main subunits: a, b and c.

The protein resides in the cell inner membrane. Its function is as follows. Produces ATP from ADP in the presence of a proton gradient across the membrane. The gamma chain is believed to be important in regulating ATPase activity and the flow of protons through the CF(0) complex. This is ATP synthase gamma chain from Bordetella bronchiseptica (strain ATCC BAA-588 / NCTC 13252 / RB50) (Alcaligenes bronchisepticus).